Consider the following 272-residue polypeptide: 4-hydroxy-tetrahydrodipicolinate reductase (272 aa).

Gly-12 to Met-17 contacts NAD(+). Lys-39 contributes to the NADP(+) binding site. NAD(+) is bound by residues Gly-102–Thr-104 and Ser-126–Tyr-129. Residue His-159 is the Proton donor/acceptor of the active site. His-160 serves as a coordination point for (S)-2,3,4,5-tetrahydrodipicolinate. The Proton donor role is filled by Lys-163. A (S)-2,3,4,5-tetrahydrodipicolinate-binding site is contributed by Gly-169 to Thr-170.

The protein belongs to the DapB family. Homotetramer.

The protein resides in the cytoplasm. It carries out the reaction (S)-2,3,4,5-tetrahydrodipicolinate + NAD(+) + H2O = (2S,4S)-4-hydroxy-2,3,4,5-tetrahydrodipicolinate + NADH + H(+). The enzyme catalyses (S)-2,3,4,5-tetrahydrodipicolinate + NADP(+) + H2O = (2S,4S)-4-hydroxy-2,3,4,5-tetrahydrodipicolinate + NADPH + H(+). It participates in amino-acid biosynthesis; L-lysine biosynthesis via DAP pathway; (S)-tetrahydrodipicolinate from L-aspartate: step 4/4. In terms of biological role, catalyzes the conversion of 4-hydroxy-tetrahydrodipicolinate (HTPA) to tetrahydrodipicolinate. The chain is 4-hydroxy-tetrahydrodipicolinate reductase from Buchnera aphidicola subsp. Baizongia pistaciae (strain Bp).